The primary structure comprises 159 residues: Fatty acid-binding protein homolog 1 (159 aa).

An N-terminal signal peptide occupies residues 1–17; it reads MCAKIALLLVLVGAASA.

Belongs to the calycin superfamily. Fatty-acid binding protein (FABP) family. As to expression, first detected in hypodermal precursor cells at the time of gastrulation. From the two-fold stage through to three-fold stages, expression is localized exclusively to hyp-7 but disappears in newly hatched L1s and subsequent developmental stages. Expression from L1 to adult stages is found in a single neuron in the ventral cord with a process into the nerve ring.

The protein localises to the secreted. Functionally, may play a role in sequestering potentially toxic fatty acids and their peroxidation products, or it may be involved in the maintenance of the impermeable lipid layer of the eggshell. The sequence is that of Fatty acid-binding protein homolog 1 (lbp-1) from Caenorhabditis elegans.